The sequence spans 208 residues: Uracil phosphoribosyltransferase (208 aa).

Residues Arg78, Arg103, and 130–138 contribute to the 5-phospho-alpha-D-ribose 1-diphosphate site; that span reads DPMFATGGT. Uracil-binding positions include Ile193 and 198 to 200; that span reads GDA. Asp199 serves as a coordination point for 5-phospho-alpha-D-ribose 1-diphosphate.

This sequence belongs to the UPRTase family. Requires Mg(2+) as cofactor.

It carries out the reaction UMP + diphosphate = 5-phospho-alpha-D-ribose 1-diphosphate + uracil. Its pathway is pyrimidine metabolism; UMP biosynthesis via salvage pathway; UMP from uracil: step 1/1. Allosterically activated by GTP. Functionally, catalyzes the conversion of uracil and 5-phospho-alpha-D-ribose 1-diphosphate (PRPP) to UMP and diphosphate. In Campylobacter curvus (strain 525.92), this protein is Uracil phosphoribosyltransferase.